The sequence spans 940 residues: Protein translocase subunit SecA 1 (940 aa).

ATP is bound by residues Gln83, Gly101–Thr105, and Asp490. The disordered stretch occupies residues Ala856–Arg940.

It belongs to the SecA family. Monomer and homodimer. Part of the essential Sec protein translocation apparatus which comprises SecA, SecYEG and auxiliary proteins SecDF. Other proteins may also be involved.

The protein resides in the cell membrane. It is found in the cytoplasm. The catalysed reaction is ATP + H2O + cellular proteinSide 1 = ADP + phosphate + cellular proteinSide 2.. Part of the Sec protein translocase complex. Interacts with the SecYEG preprotein conducting channel. Has a central role in coupling the hydrolysis of ATP to the transfer of proteins into and across the cell membrane, serving as an ATP-driven molecular motor driving the stepwise translocation of polypeptide chains across the membrane. This chain is Protein translocase subunit SecA 1, found in Mycolicibacterium paratuberculosis (strain ATCC BAA-968 / K-10) (Mycobacterium paratuberculosis).